The following is a 331-amino-acid chain: Taste receptor type 2 member 38 (331 aa).

The Extracellular segment spans residues Met1–Ser17. Residues Phe18–Leu38 form a helical membrane-spanning segment. The Cytoplasmic portion of the chain corresponds to Val39 to Asp54. Residues Ile55–Ala75 traverse the membrane as a helical segment. Residues Ile76–Ala94 lie on the Extracellular side of the membrane. Residues Ile95 to Leu115 traverse the membrane as a helical segment. Residues Leu116 to Gln142 lie on the Cytoplasmic side of the membrane. A helical membrane pass occupies residues Met143 to Phe163. The Extracellular segment spans residues Ser164–Asn198. N-linked (GlcNAc...) asparagine glycosylation is present at Asn177. The helical transmembrane segment at Val199–Leu219 threads the bilayer. Over Gly220 to Arg243 the chain is Cytoplasmic. Residues Ala244 to Ile264 traverse the membrane as a helical segment. The Extracellular portion of the chain corresponds to Ser265 to Gly276. A helical membrane pass occupies residues Gly277–Ile297. At Ser298–Leu331 the chain is on the cytoplasmic side.

It belongs to the G-protein coupled receptor T2R family. Expressed in tongue, stomach and duodenum.

It localises to the membrane. Its function is as follows. Putative taste receptor which may play a role in the perception of bitterness. The polypeptide is Taste receptor type 2 member 38 (Tas2r38) (Rattus norvegicus (Rat)).